Reading from the N-terminus, the 152-residue chain is Deoxyuridine 5'-triphosphate nucleotidohydrolase (152 aa).

Residues 71 to 73 (RSG), Asn84, 88 to 90 (LID), and Met98 each bind substrate.

The protein belongs to the dUTPase family. Mg(2+) serves as cofactor.

The enzyme catalyses dUTP + H2O = dUMP + diphosphate + H(+). The protein operates within pyrimidine metabolism; dUMP biosynthesis; dUMP from dCTP (dUTP route): step 2/2. Functionally, this enzyme is involved in nucleotide metabolism: it produces dUMP, the immediate precursor of thymidine nucleotides and it decreases the intracellular concentration of dUTP so that uracil cannot be incorporated into DNA. This chain is Deoxyuridine 5'-triphosphate nucleotidohydrolase, found in Serratia proteamaculans (strain 568).